The primary structure comprises 76 residues: Small proline-rich protein 2E (76 aa).

Tandem repeats lie at residues K21 to H29, P30 to P38, and P39 to E47. Residues K21–E47 are 3 X 9 AA approximate tandem repeats. Residues P52–K76 form a disordered region.

Belongs to the cornifin (SPRR) family. Expressed in uterus.

It is found in the cytoplasm. Its function is as follows. Cross-linked envelope protein of keratinocytes. It is a keratinocyte protein that first appears in the cell cytosol, but ultimately becomes cross-linked to membrane proteins by transglutaminase. All that results in the formation of an insoluble envelope beneath the plasma membrane. This chain is Small proline-rich protein 2E (Sprr2e), found in Mus musculus (Mouse).